A 199-amino-acid polypeptide reads, in one-letter code: Probable nicotinate-nucleotide adenylyltransferase (199 aa).

The protein belongs to the NadD family.

The enzyme catalyses nicotinate beta-D-ribonucleotide + ATP + H(+) = deamido-NAD(+) + diphosphate. Its pathway is cofactor biosynthesis; NAD(+) biosynthesis; deamido-NAD(+) from nicotinate D-ribonucleotide: step 1/1. Catalyzes the reversible adenylation of nicotinate mononucleotide (NaMN) to nicotinic acid adenine dinucleotide (NaAD). The polypeptide is Probable nicotinate-nucleotide adenylyltransferase (Chloroherpeton thalassium (strain ATCC 35110 / GB-78)).